A 470-amino-acid chain; its full sequence is Glycine--tRNA ligase (470 aa).

Residues Arg94 and Glu183 each contribute to the substrate site. ATP-binding positions include 215–217, 225–230, 298–299, and 342–345; these read RNE, FRMVEF, EI, and GCDR. 230-234 contacts substrate; that stretch reads FEQME. 338 to 342 serves as a coordination point for substrate; sequence ETSSG.

Belongs to the class-II aminoacyl-tRNA synthetase family. As to quaternary structure, homodimer.

Its subcellular location is the cytoplasm. It catalyses the reaction tRNA(Gly) + glycine + ATP = glycyl-tRNA(Gly) + AMP + diphosphate. Functionally, catalyzes the attachment of glycine to tRNA(Gly). The polypeptide is Glycine--tRNA ligase (Chlorobaculum tepidum (strain ATCC 49652 / DSM 12025 / NBRC 103806 / TLS) (Chlorobium tepidum)).